The sequence spans 411 residues: Phosphopentomutase (411 aa).

Mn(2+) contacts are provided by aspartate 14, aspartate 306, histidine 311, aspartate 347, histidine 348, and histidine 359.

The protein belongs to the phosphopentomutase family. The cofactor is Mn(2+).

The protein localises to the cytoplasm. The enzyme catalyses 2-deoxy-alpha-D-ribose 1-phosphate = 2-deoxy-D-ribose 5-phosphate. It carries out the reaction alpha-D-ribose 1-phosphate = D-ribose 5-phosphate. Its pathway is carbohydrate degradation; 2-deoxy-D-ribose 1-phosphate degradation; D-glyceraldehyde 3-phosphate and acetaldehyde from 2-deoxy-alpha-D-ribose 1-phosphate: step 1/2. Its function is as follows. Isomerase that catalyzes the conversion of deoxy-ribose 1-phosphate (dRib-1-P) and ribose 1-phosphate (Rib-1-P) to deoxy-ribose 5-phosphate (dRib-5-P) and ribose 5-phosphate (Rib-5-P), respectively. The sequence is that of Phosphopentomutase from Lactococcus lactis subsp. cremoris (strain MG1363).